Here is a 363-residue protein sequence, read N- to C-terminus: Ferrochelatase (363 aa).

The Fe cation site is built by H209 and E290.

The protein belongs to the ferrochelatase family.

It localises to the cytoplasm. The catalysed reaction is heme b + 2 H(+) = protoporphyrin IX + Fe(2+). It functions in the pathway porphyrin-containing compound metabolism; protoheme biosynthesis; protoheme from protoporphyrin-IX: step 1/1. In terms of biological role, catalyzes the ferrous insertion into protoporphyrin IX. This Methylibium petroleiphilum (strain ATCC BAA-1232 / LMG 22953 / PM1) protein is Ferrochelatase.